The chain runs to 488 residues: Ribulose bisphosphate carboxylase large chain (488 aa).

Residues Asn127 and Thr177 each contribute to the substrate site. Lys179 serves as the catalytic Proton acceptor. Lys181 provides a ligand contact to substrate. The Mg(2+) site is built by Lys205, Asp207, and Glu208. Lys205 carries the post-translational modification N6-carboxylysine. Residue His297 is the Proton acceptor of the active site. Residues Arg298, His330, and Ser382 each contribute to the substrate site.

The protein belongs to the RuBisCO large chain family. Type I subfamily. In terms of assembly, heterohexadecamer of 8 large chains and 8 small chains. Mg(2+) serves as cofactor.

It localises to the plastid. Its subcellular location is the chloroplast. It carries out the reaction 2 (2R)-3-phosphoglycerate + 2 H(+) = D-ribulose 1,5-bisphosphate + CO2 + H2O. The enzyme catalyses D-ribulose 1,5-bisphosphate + O2 = 2-phosphoglycolate + (2R)-3-phosphoglycerate + 2 H(+). In terms of biological role, ruBisCO catalyzes two reactions: the carboxylation of D-ribulose 1,5-bisphosphate, the primary event in carbon dioxide fixation, as well as the oxidative fragmentation of the pentose substrate in the photorespiration process. Both reactions occur simultaneously and in competition at the same active site. This chain is Ribulose bisphosphate carboxylase large chain, found in Antithamnion sp. (Red alga).